We begin with the raw amino-acid sequence, 356 residues long: GTPase Obg (356 aa).

One can recognise an Obg domain in the interval 2–160 (ESFVDEVAIE…KFLRLSLKLL (159 aa)). The 169-residue stretch at 161 to 329 (ADVGIVGLPN…LLENMDEVFF (169 aa)) folds into the OBG-type G domain. GTP is bound by residues 167 to 174 (GLPNAGKS), 192 to 196 (FTTLS), 215 to 218 (DIPG), 282 to 285 (NKID), and 310 to 312 (SAD). 2 residues coordinate Mg(2+): Ser174 and Thr194.

This sequence belongs to the TRAFAC class OBG-HflX-like GTPase superfamily. OBG GTPase family. As to quaternary structure, monomer. It depends on Mg(2+) as a cofactor.

It localises to the cytoplasm. In terms of biological role, an essential GTPase which binds GTP, GDP and possibly (p)ppGpp with moderate affinity, with high nucleotide exchange rates and a fairly low GTP hydrolysis rate. Plays a role in control of the cell cycle, stress response, ribosome biogenesis and in those bacteria that undergo differentiation, in morphogenesis control. The chain is GTPase Obg from Leptospira interrogans serogroup Icterohaemorrhagiae serovar copenhageni (strain Fiocruz L1-130).